A 163-amino-acid polypeptide reads, in one-letter code: MALNLQDKQAIVAEVNEAAKGALSAVVADSRGVTVEKMTELRKSAREAGVTMRVVRNTLLRRAVEGTEFECLTDTFTGPTLIAFSHEHPGAAARLFTEFAKANKEFELKGAAFEGKVQDVEFLATLPTYEEAIARLMGTMKEAAAGKLVRTLAALRDKLQEAA.

The protein belongs to the universal ribosomal protein uL10 family. In terms of assembly, part of the ribosomal stalk of the 50S ribosomal subunit. The N-terminus interacts with L11 and the large rRNA to form the base of the stalk. The C-terminus forms an elongated spine to which L12 dimers bind in a sequential fashion forming a multimeric L10(L12)X complex.

Forms part of the ribosomal stalk, playing a central role in the interaction of the ribosome with GTP-bound translation factors. This chain is Large ribosomal subunit protein uL10, found in Actinobacillus pleuropneumoniae serotype 5b (strain L20).